The sequence spans 38 residues: Esterase-5 (38 aa).

The segment at 1 to 38 (SAAADPLIVELPNGKVRGRDNEGYYEAEGIPRAEPPVG) is disordered.

Belongs to the type-B carboxylesterase/lipase family.

The enzyme catalyses a carboxylic ester + H2O = an alcohol + a carboxylate + H(+). The protein is Esterase-5 (Est-5) of Drosophila mojavensis (Fruit fly).